A 281-amino-acid polypeptide reads, in one-letter code: Clc-like protein 5 (281 aa).

4 helical membrane-spanning segments follow: residues Leu-13–Pro-33, Val-104–Phe-124, Ile-137–Phe-157, and Tyr-184–Val-204.

The protein belongs to the Clc family.

Its subcellular location is the membrane. The protein is Clc-like protein 5 (clc-5) of Caenorhabditis elegans.